We begin with the raw amino-acid sequence, 146 residues long: UPF0178 protein OB0454 (146 aa).

The protein belongs to the UPF0178 family.

The sequence is that of UPF0178 protein OB0454 from Oceanobacillus iheyensis (strain DSM 14371 / CIP 107618 / JCM 11309 / KCTC 3954 / HTE831).